The following is a 365-amino-acid chain: Protein RecA (365 aa).

73–80 (GPESSGKT) provides a ligand contact to ATP.

The protein belongs to the RecA family.

It is found in the cytoplasm. Its function is as follows. Can catalyze the hydrolysis of ATP in the presence of single-stranded DNA, the ATP-dependent uptake of single-stranded DNA by duplex DNA, and the ATP-dependent hybridization of homologous single-stranded DNAs. It interacts with LexA causing its activation and leading to its autocatalytic cleavage. This is Protein RecA from Prochlorococcus marinus (strain MIT 9301).